A 274-amino-acid polypeptide reads, in one-letter code: Penicillin-insensitive murein endopeptidase (274 aa).

The signal sequence occupies residues 1–19 (MNKTAIALLALLASSASLA). Intrachain disulfides connect Cys44–Cys265, Cys187–Cys235, and Cys216–Cys223. 6 residues coordinate Zn(2+): His110, His113, Asp120, Asp147, His150, and His211. Residues 227 to 274 (PLPPPGDGCGAELQSWFEPPKPGTTKPEKKTPPPLPPSCQALLDEHVI) are disordered.

The protein belongs to the peptidase M74 family. Dimer. It depends on Zn(2+) as a cofactor.

The protein resides in the periplasm. In terms of biological role, murein endopeptidase that cleaves the D-alanyl-meso-2,6-diamino-pimelyl amide bond that connects peptidoglycan strands. Likely plays a role in the removal of murein from the sacculus. The chain is Penicillin-insensitive murein endopeptidase from Escherichia coli O6:K15:H31 (strain 536 / UPEC).